We begin with the raw amino-acid sequence, 357 residues long: Putative lipopolysaccharide heptosyltransferase 4 (357 aa).

The enzyme catalyses alpha-D-Glc-(1-&gt;2)-alpha-D-Glc-(1-&gt;3)-[alpha-D-Gal-(1-&gt;6)]-alpha-D-Glc-(1-&gt;3)-[L-alpha-D-Hep-(1-&gt;7)]-4-O-PO3(2-)-L-alpha-D-Hep-(1-&gt;3)-4-O-PO3(2-)-L-alpha-D-Hep-(1-&gt;5)-[alpha-Kdo-(2-&gt;4)]-alpha-Kdo-(2-&gt;6)-lipid A + ADP-L-glycero-beta-D-manno-heptose = lipid A-core + ADP + H(+). The protein operates within bacterial outer membrane biogenesis; LPS core biosynthesis. In terms of biological role, transferase involved in the biosynthesis of the core oligosaccharide region of lipopolysaccharide (LPS). May catalyze the addition of the terminal heptose (heptose IV) to the outer-core glucose III, the last step of the lipid A-core oligosaccharide biosynthesis. The chain is Putative lipopolysaccharide heptosyltransferase 4 from Escherichia coli (strain K12).